Reading from the N-terminus, the 427-residue chain is UPF0229 protein YeaH (427 aa).

Basic and acidic residues predominate over residues 79–90 (NDHFVQNDRIER). The segment at 79 to 110 (NDHFVQNDRIERPQGGGGGSGSGQGQASQDGE) is disordered. Residues 92–102 (QGGGGGSGSGQ) show a composition bias toward gly residues.

This sequence belongs to the UPF0229 family.

This Escherichia coli O127:H6 (strain E2348/69 / EPEC) protein is UPF0229 protein YeaH.